The sequence spans 194 residues: Phosphoheptose isomerase (194 aa).

In terms of domain architecture, SIS spans Ile37–Ala194. Asn52–Gly54 is a substrate binding site. Zn(2+) contacts are provided by His61 and Glu65. Substrate-binding positions include Glu65, Asn93–Asp94, Ser119–Ser121, Ser124, and Gln172. Zn(2+) contacts are provided by Gln172 and His180.

The protein belongs to the SIS family. GmhA subfamily. As to quaternary structure, homotetramer. The cofactor is Zn(2+).

The protein resides in the cytoplasm. It catalyses the reaction 2 D-sedoheptulose 7-phosphate = D-glycero-alpha-D-manno-heptose 7-phosphate + D-glycero-beta-D-manno-heptose 7-phosphate. It participates in carbohydrate biosynthesis; D-glycero-D-manno-heptose 7-phosphate biosynthesis; D-glycero-alpha-D-manno-heptose 7-phosphate and D-glycero-beta-D-manno-heptose 7-phosphate from sedoheptulose 7-phosphate: step 1/1. The protein operates within bacterial outer membrane biogenesis; LOS core biosynthesis. In terms of biological role, catalyzes the isomerization of sedoheptulose 7-phosphate in D-glycero-D-manno-heptose 7-phosphate. The protein is Phosphoheptose isomerase of Haemophilus ducreyi (strain 35000HP / ATCC 700724).